The chain runs to 144 residues: Prefoldin subunit alpha (144 aa).

It belongs to the prefoldin alpha subunit family. Heterohexamer of two alpha and four beta subunits.

It localises to the cytoplasm. In terms of biological role, molecular chaperone capable of stabilizing a range of proteins. Seems to fulfill an ATP-independent, HSP70-like function in archaeal de novo protein folding. The chain is Prefoldin subunit alpha from Methanococcus maripaludis (strain C7 / ATCC BAA-1331).